Consider the following 693-residue polypeptide: Putative transmembrane protein ORF68 (693 aa).

The signal sequence occupies residues 1 to 17 (MILTIILYTLLFSTCSA). Over 18–666 (QSVHTMPEAV…WLTKFGTGGG (649 aa)) the chain is Extracellular. A coiled-coil region spans residues 208–256 (SKAANNRMDALEDGMKNINTRVTETNLLLEKLSTEVTGALTQLENEIKM). A helical membrane pass occupies residues 667–687 (IAGVTIGLLLPILAIVFSCYV). Residues 688 to 693 (FCKRRV) lie on the Cytoplasmic side of the membrane.

It localises to the host membrane. This is Putative transmembrane protein ORF68 from Magallana gigas (Pacific oyster).